The following is a 300-amino-acid chain: MASPDLSNAYNGRIDLGSLANNASINRALNDMPTAVDDAGVRPQPPIDLTAAAFFDVDNTLVQGSSAVHFGRGLAARDYFTYRDVLGFIYAQAKFQLLGKENSQDVAAGQRKALAFIEGRSVEQLVALGEEIYDEIIADKIWAGTRQLTQIHLDAGQQVWLITATPYELAATIARRLGLTGALGTVAESVDGIFTGRLVDELLHGVGKAHAVRSLAIREGLNLKRCTAYSDSYNDVPMLSLVGTAVAINPDAQLRSLARERGWEIRDFRTARKAARIGVPSALALGGALAAAVSRRRDRE.

Asp-56 serves as the catalytic Nucleophile. Mg(2+)-binding residues include Asp-56, Asp-58, and Asp-231. Asp-58 (proton donor) is an active-site residue.

Belongs to the HAD-like hydrolase superfamily. SerB family. It depends on Mg(2+) as a cofactor.

The sequence is that of Putative hydrolase ML2424 from Mycobacterium leprae (strain TN).